We begin with the raw amino-acid sequence, 576 residues long: Boron transporter 1 (576 aa).

Over 1-84 the chain is Cytoplasmic; the sequence is MSNESTRVTV…SDWVDAFNYR (84 aa). Residues 19-48 form a disordered region; it reads ECAQALERTNDELDRESSVSESRSDEESHE. Over residues 26-48 the composition is skewed to basic and acidic residues; it reads RTNDELDRESSVSESRSDEESHE. Residues 85–105 traverse the membrane as a helical segment; it reads VIPSIVDTYFNNLLPAIAFAQ. Residues 106-116 lie on the Extracellular side of the membrane; sequence DMFDRTDNSYG. The chain crosses the membrane as a helical span at residues 117-134; that stretch reads VNEVLLSSAMAGIVFGVL. At 135–140 the chain is on the cytoplasmic side; that stretch reads GGQPLC. A helical membrane pass occupies residues 141–160; the sequence is IVGVTGPISIFNYTVYEIIK. The Extracellular portion of the chain corresponds to 161-165; it reads PLNTS. Residues 166–186 traverse the membrane as a helical segment; that stretch reads YFGFMFWICMWSMIFHLVLAF. Residues 187 to 192 lie on the Cytoplasmic side of the membrane; sequence TNAVCL. A helical transmembrane segment spans residues 193 to 213; the sequence is LQYVTTFPCDIFGLFINVVYI. Residues 214–235 lie on the Extracellular side of the membrane; the sequence is QKGIQILTRQFSAKSGEKSVQD. The helical transmembrane segment at 236–256 threads the bilayer; sequence GFASVVVALVMTAFGLFFKLF. The Cytoplasmic segment spans residues 257–274; sequence HYYPLFSHRIRTFISDYS. Residues 275–295 form a helical membrane-spanning segment; that stretch reads TALSVLFWSSFTHFGGYLHDV. Over 296 to 329 the chain is Extracellular; it reads KFKKLPITKAFFPTSKVNRPQNTWLAYEPIPVKD. A helical transmembrane segment spans residues 330 to 350; it reads VFIALPFGIFLTILFYFDHNV. Topologically, residues 351-373 are cytoplasmic; that stretch reads SSLMAQRHQYKLKKPSSFHYDFA. A helical membrane pass occupies residues 374–394; it reads LLGLTTCISGVLGIPAPNGLI. At 395–438 the chain is on the extracellular side; that stretch reads PQAPLHTETLLVRDSNQKVISCVEQRFTNTFQGLMILGTMTRPL. A helical membrane pass occupies residues 439 to 459; the sequence is LVCLGEIPQAVLSGLFFIMGI. Residues 460–495 lie on the Cytoplasmic side of the membrane; it reads NGLMTNSIIQRLVFLFSDPNRRDNTSPLMKVSKKSM. The helical transmembrane segment at 496–516 threads the bilayer; it reads LIFLSFSLTGFAGEFAITNTI. At 517–518 the chain is on the extracellular side; that stretch reads AA. The helical transmembrane segment at 519-539 threads the bilayer; sequence IGFPLVLLLSVLVSFSFAYIF. The Cytoplasmic portion of the chain corresponds to 540–576; it reads PTEELKILDTNVAQKFTIKNLLLENIRDAKFCDKHED.

This sequence belongs to the anion exchanger (TC 2.A.31) family.

The protein resides in the cell membrane. Its subcellular location is the vacuole membrane. Functionally, functions in boric acid/borate export across the plasma membrane, and thereby protects yeast cells from boron toxicity. Involved in the trafficking of proteins to the vacuole. This chain is Boron transporter 1 (BOR1), found in Saccharomyces cerevisiae (strain ATCC 204508 / S288c) (Baker's yeast).